Consider the following 321-residue polypeptide: tRNA U34 carboxymethyltransferase (321 aa).

Carboxy-S-adenosyl-L-methionine-binding positions include lysine 90, tryptophan 104, lysine 109, glycine 129, 151–153 (DPT), 180–181 (IE), methionine 195, tyrosine 199, and arginine 314.

This sequence belongs to the class I-like SAM-binding methyltransferase superfamily. CmoB family. Homotetramer.

It carries out the reaction carboxy-S-adenosyl-L-methionine + 5-hydroxyuridine(34) in tRNA = 5-carboxymethoxyuridine(34) in tRNA + S-adenosyl-L-homocysteine + H(+). Catalyzes carboxymethyl transfer from carboxy-S-adenosyl-L-methionine (Cx-SAM) to 5-hydroxyuridine (ho5U) to form 5-carboxymethoxyuridine (cmo5U) at position 34 in tRNAs. The sequence is that of tRNA U34 carboxymethyltransferase from Haemophilus influenzae (strain ATCC 51907 / DSM 11121 / KW20 / Rd).